The chain runs to 387 residues: Polyadenylate-binding protein RBP45A (387 aa).

3 consecutive RRM domains span residues 60–140 (KSLW…WAQA), 154–233 (HTIF…PAAN), and 260–332 (TTIF…WGRS). A compositionally biased stretch (polar residues) spans 329-342 (WGRSPNKQSDQAQW). The interval 329-387 (WGRSPNKQSDQAQWNGGGYYGYPPQPQGGYGYAAQPPTQDPNAYYGGYTGYGNYQQQRQ) is disordered.

Belongs to the polyadenylate-binding RBP45 family. In terms of assembly, interacts with the poly(A) tail of mRNA in nucleus. As to expression, mostly expressed in seedlings, and, to a lower extent, in leaves, stems, and flowers. Present in immature anther tissues (tapetum cells) and mature pollen grains.

It is found in the nucleus. In terms of biological role, heterogeneous nuclear ribonucleoprotein (hnRNP)-protein binding the poly(A) tail of mRNA and probably involved in some steps of pre-mRNA maturation. This Arabidopsis thaliana (Mouse-ear cress) protein is Polyadenylate-binding protein RBP45A (RBP45A).